Here is a 344-residue protein sequence, read N- to C-terminus: DNA-directed RNA polymerase subunit alpha (344 aa).

Residues 1-246 (MPVEKFLKDF…EFLFPLIDFE (246 aa)) form an alpha N-terminal domain (alpha-NTD) region. The alpha C-terminal domain (alpha-CTD) stretch occupies residues 259-344 (ESSNLLDMSI…VLSKNVKISE (86 aa)).

It belongs to the RNA polymerase alpha chain family. Homodimer. The RNAP catalytic core consists of 2 alpha, 1 beta, 1 beta' and 1 omega subunit. When a sigma factor is associated with the core the holoenzyme is formed, which can initiate transcription.

The enzyme catalyses RNA(n) + a ribonucleoside 5'-triphosphate = RNA(n+1) + diphosphate. Functionally, DNA-dependent RNA polymerase catalyzes the transcription of DNA into RNA using the four ribonucleoside triphosphates as substrates. The polypeptide is DNA-directed RNA polymerase subunit alpha (Borrelia garinii subsp. bavariensis (strain ATCC BAA-2496 / DSM 23469 / PBi) (Borreliella bavariensis)).